Here is a 2475-residue protein sequence, read N- to C-terminus: Polyprotein pp220 (2475 aa).

G2 carries N-myristoyl glycine; by host lipidation. Positions 2184–2211 form a coiled coil; the sequence is RNQIIGELNAFRTQLEDTLREVNNLVQT.

It belongs to the asfivirus polyprotein pp220 family. Post-translationally, specific enzymatic cleavages in vivo by the viral pS273R protease yield mature proteins.

The protein localises to the host cytoplasm. Its subcellular location is the host perinuclear region. The protein resides in the virion. It is found in the host nucleus. In terms of biological role, essential for the core assembly. Its myristoyl moiety may function as a membrane-anchoring signal to bind the developing core shell to the inner viral envelope. The structural protein p34 is a component of the virus core shell. Its function is as follows. The structural protein p14 is a component of the virus core shell. Functionally, the structural protein p37 is a component of the virus core shell. In terms of biological role, the structural protein p150 is a component of the virus core shell. The chain is Polyprotein pp220 from African swine fever virus (isolate Tick/Malawi/Lil 20-1/1983) (ASFV).